Reading from the N-terminus, the 108-residue chain is Vacuolar ATPase assembly integral membrane protein VMA21 (108 aa).

Residues 1-34 (MASRRSAAAKKEDFSFEAAATQSAHEAQEGFPSS) are Cytoplasmic-facing. Residues 35–55 (VIIKLVLVTVAMICAPLGTYF) form a helical membrane-spanning segment. Residues 56-68 (GTLNTICGGDSSY) are Lumenal-facing. Residues 69-89 (AGALAAISVNVVLIIYLIIAA) form a helical membrane-spanning segment. Over 90 to 108 (REDTGESEEERKGKEGKEE) the chain is Cytoplasmic.

Belongs to the VMA21 family.

The protein resides in the endoplasmic reticulum membrane. It is found in the endoplasmic reticulum-Golgi intermediate compartment membrane. The protein localises to the cytoplasmic vesicle. Its subcellular location is the COPII-coated vesicle membrane. Functionally, required for the assembly of the V0 complex of the vacuolar ATPase (V-ATPase) in the endoplasmic reticulum. The sequence is that of Vacuolar ATPase assembly integral membrane protein VMA21 from Ajellomyces capsulatus (strain NAm1 / WU24) (Darling's disease fungus).